The following is a 38-amino-acid chain: Photosystem II reaction center protein L (38 aa).

A helical transmembrane segment spans residues 17–37 (SLYWGLLCIFVLAILFSSYFF).

It belongs to the PsbL family. As to quaternary structure, PSII is composed of 1 copy each of membrane proteins PsbA, PsbB, PsbC, PsbD, PsbE, PsbF, PsbH, PsbI, PsbJ, PsbK, PsbL, PsbM, PsbT, PsbX, PsbY, PsbZ, Psb30/Ycf12, at least 3 peripheral proteins of the oxygen-evolving complex and a large number of cofactors. It forms dimeric complexes.

The protein resides in the plastid. It is found in the chloroplast thylakoid membrane. Its function is as follows. One of the components of the core complex of photosystem II (PSII). PSII is a light-driven water:plastoquinone oxidoreductase that uses light energy to abstract electrons from H(2)O, generating O(2) and a proton gradient subsequently used for ATP formation. It consists of a core antenna complex that captures photons, and an electron transfer chain that converts photonic excitation into a charge separation. This subunit is found at the monomer-monomer interface and is required for correct PSII assembly and/or dimerization. In Cyanidioschyzon merolae (strain NIES-3377 / 10D) (Unicellular red alga), this protein is Photosystem II reaction center protein L.